A 412-amino-acid chain; its full sequence is DNA polymerase IV (412 aa).

Positions Ile-12–Gly-193 constitute a UmuC domain. Mg(2+) contacts are provided by Asp-16 and Asp-112. Glu-113 is a catalytic residue. A disordered region spans residues Lys-235–Met-257. Residues Gln-246 to Met-257 are compositionally biased toward polar residues.

Belongs to the DNA polymerase type-Y family. Monomer. The cofactor is Mg(2+).

The protein resides in the cytoplasm. The enzyme catalyses DNA(n) + a 2'-deoxyribonucleoside 5'-triphosphate = DNA(n+1) + diphosphate. Its function is as follows. Poorly processive, error-prone DNA polymerase involved in untargeted mutagenesis. Copies undamaged DNA at stalled replication forks, which arise in vivo from mismatched or misaligned primer ends. These misaligned primers can be extended by PolIV. Exhibits no 3'-5' exonuclease (proofreading) activity. May be involved in translesional synthesis, in conjunction with the beta clamp from PolIII. The chain is DNA polymerase IV from Bacillus anthracis.